The chain runs to 308 residues: MRSKKMINEKLKMWWETARPKTLPLALASIFTGSALGYWANPQGFNGLVMVLCLLTTILLQVLSNFANDYGDHQKGSDTEERIGPLRGIQKGAISAKELKWGLILMVMASFLSGSFLIGIAYENLSDLFAFAGLGILAIVAAITYTVGVKPYGYMGLGDISVLVFFGLLGVGGTYYLQTHSIDSHIILPAIGSGLLASAVLNINNLRDIEQDAKAGKNTLAVRLGAYKGRVYHCILLSVAALCYLAFAVATAISWTNYLFVLAMPLLAKHAIFVYCSQQPSELRPILAQMSMISLLINILFSLGLLIG.

The next 9 helical transmembrane spans lie at 22–42 (TLPL…WANP), 47–67 (GLVM…SNFA), 101–121 (WGLI…IGIA), 129–149 (FAFA…TVGV), 153–173 (GYMG…GVGG), 186–206 (IILP…INNL), 235–255 (ILLS…AISW), 256–276 (TNYL…FVYC), and 286–306 (ILAQ…LGLL).

It belongs to the MenA family. Type 1 subfamily.

Its subcellular location is the cell inner membrane. The enzyme catalyses an all-trans-polyprenyl diphosphate + 1,4-dihydroxy-2-naphthoate + H(+) = a 2-demethylmenaquinol + CO2 + diphosphate. The protein operates within quinol/quinone metabolism; menaquinone biosynthesis; menaquinol from 1,4-dihydroxy-2-naphthoate: step 1/2. Functionally, conversion of 1,4-dihydroxy-2-naphthoate (DHNA) to demethylmenaquinone (DMK). In Haemophilus influenzae (strain ATCC 51907 / DSM 11121 / KW20 / Rd), this protein is 1,4-dihydroxy-2-naphthoate octaprenyltransferase.